A 241-amino-acid polypeptide reads, in one-letter code: Terpene cyclase terB (241 aa).

Transmembrane regions (helical) follow at residues 19–39 (LADT…GAMI), 48–68 (YCMG…YTLV), 75–95 (VELA…FAAT), 114–134 (LIFL…AAEI), and 137–157 (ALAY…GGVC). The N-linked (GlcNAc...) asparagine glycan is linked to N163. A run of 2 helical transmembrane segments spans residues 169–189 (SVTL…FAFL) and 198–218 (FAWL…LADI).

This sequence belongs to the paxB family.

The protein localises to the membrane. It functions in the pathway secondary metabolite biosynthesis. Terpene cyclase; part of the gene cluster that mediates the biosynthesis of terpendoles, indole-diterpene (IDT) mycotoxins including terpendole I, terpendole K, terpendole C, as well as the kinesin Eg5 inhibitor terpendole E. Terpendoles biosynthesis begins with the synthesis of geranylgeranyl diphosphate (GGPP) by a yet unidentified GGPP synthase. Condensation of indole-3-glycerol phosphate with GGPP by the prenyltransferase terC then forms 3-geranylgeranylindole (3-GGI), followed by epoxidation and cyclization of this intermediate (by the FAD-dependent monooxygeanse terM and the terpene cyclase terB) to form paspaline. The cytochrome monooxygenase terQ then hydroxylates paspalline at C-11 to yield terpendole E. The cytochrome monooxygenase terP converts terpendole E to 13-desoxyterpendole I, and terQ converts 13-desoxyterpendole I into terpendole I. TerF and terK are required for conversion of terpendole I to terpendole C which is further converted to terpendole K. This chain is Terpene cyclase terB, found in Tolypocladium album (Soil fungus).